We begin with the raw amino-acid sequence, 425 residues long: Serine--tRNA ligase (425 aa).

Residue 233–235 (TAE) coordinates L-serine. 264-266 (RAE) provides a ligand contact to ATP. Glu-287 serves as a coordination point for L-serine. 351–354 (EISS) contributes to the ATP binding site. Ser-387 serves as a coordination point for L-serine.

This sequence belongs to the class-II aminoacyl-tRNA synthetase family. Type-1 seryl-tRNA synthetase subfamily. As to quaternary structure, homodimer. The tRNA molecule binds across the dimer.

It is found in the cytoplasm. It catalyses the reaction tRNA(Ser) + L-serine + ATP = L-seryl-tRNA(Ser) + AMP + diphosphate + H(+). It carries out the reaction tRNA(Sec) + L-serine + ATP = L-seryl-tRNA(Sec) + AMP + diphosphate + H(+). It participates in aminoacyl-tRNA biosynthesis; selenocysteinyl-tRNA(Sec) biosynthesis; L-seryl-tRNA(Sec) from L-serine and tRNA(Sec): step 1/1. Its function is as follows. Catalyzes the attachment of serine to tRNA(Ser). Is also able to aminoacylate tRNA(Sec) with serine, to form the misacylated tRNA L-seryl-tRNA(Sec), which will be further converted into selenocysteinyl-tRNA(Sec). The chain is Serine--tRNA ligase from Clostridium perfringens (strain ATCC 13124 / DSM 756 / JCM 1290 / NCIMB 6125 / NCTC 8237 / Type A).